Reading from the N-terminus, the 570-residue chain is Ribosome-inactivating protein SNAI (570 aa).

An N-terminal signal peptide occupies residues Met-1–Arg-28. Residues Asn-40, Asn-62, and Asn-144 are each glycosylated (N-linked (GlcNAc...) asparagine). The active site involves Glu-199. N-linked (GlcNAc...) asparagine glycosylation is present at Asn-260. Disulfide bonds link Cys-284–Cys-316, Cys-332–Cys-351, and Cys-373–Cys-385. Ricin B-type lectin domains follow at residues Val-319–Gly-439 and Val-441–Thr-566. The stretch at Asp-329 to Trp-369 is one 1-alpha repeat. One copy of the 1-beta repeat lies at Leu-370–Asn-405. Residues Ser-408 to Asp-440 form a 1-gamma repeat. Residues Lys-452–Val-489 form a 2-alpha repeat. Cysteines 455 and 470 form a disulfide. A glycan (N-linked (GlcNAc...) asparagine) is linked at Asn-492. One copy of the 2-beta repeat lies at Arg-493–Asn-531. Cys-496 and Cys-513 are oxidised to a cystine. Residue Asn-526 is glycosylated (N-linked (GlcNAc...) asparagine). The stretch at Ala-534–Thr-567 is one 2-gamma repeat.

It belongs to the ribosome-inactivating protein family. Type 2 RIP subfamily. Tetramer of four pairs of disulfide bound A-B chains. In terms of processing, the precursor is processed in two chains, A and B, that are linked by a disulfide bond. A small truncated form corresponding roughly to the second ricin B-type lectin domain of the B chain, TrSNAI, can also be produced. Glycosylated. N-glycans of subunit A are (Man)2-3(Xyl)(GlcNAc)2(Fuc) at Asn-40, (GlcNAc)0-2(Man)3(Xyl)(GlcNAc)2(Fuc) or (Man)1-2(GlcNAc)2 at Asn-62, (Man)3(Xyl)(GlcNAc)2(Fuc)0-1 at Asn-144 and (GlcNAc)0-1(Man)3(Xyl)(GlcNAc)2(Fuc) at Asn-260. N-glycans of subunit B are (Man)3(Xyl)(GlcNAc)2(Fuc) at Asn-492 and (Man)6-9(GlcNAc)2 at Asn-526. Expressed in bark.

It catalyses the reaction Endohydrolysis of the N-glycosidic bond at one specific adenosine on the 28S rRNA.. Neu5Ac(alpha2-6)Gal/GalNAc specific agglutinin. Behaves as a type-2 ribosome-inactivating protein. Strongly inhibits mammalian but not plant ribosomes. The A chain is responsible for inhibiting protein synthesis through the catalytic inactivation of 60S ribosomal subunits by removing adenine from position 4,324 of 28S rRNA. The B chain binds to cell receptors and probably facilitates the entry into the cell of the A chain; B chains are also responsible for cell agglutination (lectin activity). Involved in plant defense against insects. Its function is as follows. Binds Neu5Ac(alpha2-6)Gal/GalNAc but has no clear agglutination activity. In Sambucus nigra (European elder), this protein is Ribosome-inactivating protein SNAI.